A 205-amino-acid polypeptide reads, in one-letter code: Urease accessory protein UreG (205 aa).

14-21 (GPVGSGKT) lines the GTP pocket.

Belongs to the SIMIBI class G3E GTPase family. UreG subfamily. As to quaternary structure, homodimer. UreD, UreF and UreG form a complex that acts as a GTP-hydrolysis-dependent molecular chaperone, activating the urease apoprotein by helping to assemble the nickel containing metallocenter of UreC. The UreE protein probably delivers the nickel.

It is found in the cytoplasm. Facilitates the functional incorporation of the urease nickel metallocenter. This process requires GTP hydrolysis, probably effectuated by UreG. In Enterobacter sp. (strain 638), this protein is Urease accessory protein UreG.